A 253-amino-acid polypeptide reads, in one-letter code: ATP synthase subunit b 1 (253 aa).

The chain crosses the membrane as a helical span at residues 2-22 (LIDWFTVIAELVNFLILVWLL).

The protein belongs to the ATPase B chain family. F-type ATPases have 2 components, F(1) - the catalytic core - and F(0) - the membrane proton channel. F(1) has five subunits: alpha(3), beta(3), gamma(1), delta(1), epsilon(1). F(0) has four main subunits: a(1), b(2) and c(10-14). The alpha and beta chains form an alternating ring which encloses part of the gamma chain. F(1) is attached to F(0) by a central stalk formed by the gamma and epsilon chains, while a peripheral stalk is formed by the delta and b chains.

It is found in the cell inner membrane. In terms of biological role, f(1)F(0) ATP synthase produces ATP from ADP in the presence of a proton or sodium gradient. F-type ATPases consist of two structural domains, F(1) containing the extramembraneous catalytic core and F(0) containing the membrane proton channel, linked together by a central stalk and a peripheral stalk. During catalysis, ATP synthesis in the catalytic domain of F(1) is coupled via a rotary mechanism of the central stalk subunits to proton translocation. Functionally, component of the F(0) channel, it forms part of the peripheral stalk, linking F(1) to F(0). In Prosthecochloris aestuarii (strain DSM 271 / SK 413), this protein is ATP synthase subunit b 1.